A 383-amino-acid polypeptide reads, in one-letter code: Succinyl-diaminopimelate desuccinylase (383 aa).

His69 is a Zn(2+) binding site. Asp71 is a catalytic residue. Asp103 serves as a coordination point for Zn(2+). Residue Glu137 is the Proton acceptor of the active site. Zn(2+) contacts are provided by Glu138, Glu166, and His357.

It belongs to the peptidase M20A family. DapE subfamily. As to quaternary structure, homodimer. The cofactor is Zn(2+). Co(2+) is required as a cofactor.

It catalyses the reaction N-succinyl-(2S,6S)-2,6-diaminopimelate + H2O = (2S,6S)-2,6-diaminopimelate + succinate. It functions in the pathway amino-acid biosynthesis; L-lysine biosynthesis via DAP pathway; LL-2,6-diaminopimelate from (S)-tetrahydrodipicolinate (succinylase route): step 3/3. Functionally, catalyzes the hydrolysis of N-succinyl-L,L-diaminopimelic acid (SDAP), forming succinate and LL-2,6-diaminopimelate (DAP), an intermediate involved in the bacterial biosynthesis of lysine and meso-diaminopimelic acid, an essential component of bacterial cell walls. The protein is Succinyl-diaminopimelate desuccinylase of Rickettsia prowazekii (strain Madrid E).